Reading from the N-terminus, the 86-residue chain is Acyl carrier protein (86 aa).

Residues 10 to 85 form the Carrier domain; that stretch reads DKIEQKVIEM…DVIKYIKERQ (76 aa). Ser-45 carries the O-(pantetheine 4'-phosphoryl)serine modification.

The protein belongs to the acyl carrier protein (ACP) family. 4'-phosphopantetheine is transferred from CoA to a specific serine of apo-ACP by AcpS. This modification is essential for activity because fatty acids are bound in thioester linkage to the sulfhydryl of the prosthetic group.

The protein localises to the cytoplasm. It functions in the pathway lipid metabolism; fatty acid biosynthesis. In terms of biological role, carrier of the growing fatty acid chain in fatty acid biosynthesis. This is Acyl carrier protein from Rickettsia prowazekii (strain Madrid E).